A 90-amino-acid chain; its full sequence is DNA/RNA-binding protein Alba (90 aa).

Position 8 is an N6-acetyllysine (Lys-8).

This sequence belongs to the histone-like Alba family. Post-translationally, acetylated. Acetylation at Lys-8 decreases DNA-binding affinity.

The protein resides in the cytoplasm. It is found in the chromosome. In terms of biological role, binds double-stranded DNA tightly but without sequence specificity. Involved in DNA compaction. In Nanoarchaeum equitans (strain Kin4-M), this protein is DNA/RNA-binding protein Alba.